A 354-amino-acid chain; its full sequence is Acyl-CoA-binding domain-containing protein 2 (354 aa).

The helical; Signal-anchor transmembrane segment at 11–31 threads the bilayer; the sequence is VILGLIFSYLLAKLISIVVTF. The interval 75 to 96 is disordered; the sequence is AEQGSSRSDSVAGDDSEEDDDW. Positions 86–96 are enriched in acidic residues; it reads AGDDSEEDDDW. The 91-residue stretch at 104-194 folds into the ACB domain; sequence LDEAFSAATL…VTQLYPTWLD (91 aa). An acyl-CoA is bound by residues 136–140, lysine 162, and tyrosine 181; that span reads YGLYK. ANK repeat units lie at residues 265-294 and 298-327; these read EGRT…DVNA and EGQT…NTAA.

Belongs to the ACBP family. Interacts (via ankyrin repeats) with HIPP26 and the ethylene-responsive element-binding proteins RAP2-3/EBP and RAP2-12. Interacts with CSE. Mostly expressed in roots and flowers, and, to a lower extent, in stems, pods and leaves (at protein level).

It localises to the cell membrane. The protein localises to the endoplasmic reticulum membrane. The protein resides in the peroxisome membrane. Binds medium- and long-chain acyl-CoA esters with very high affinity. Can interact in vitro with palmitoyl-CoA, but not with oleoyl-CoA. Binds to lead ions (Pb). May function as an intracellular carrier of acyl-CoA esters. Required for proper phospholipid and, to a lower extent, galactolipid composition. This Arabidopsis thaliana (Mouse-ear cress) protein is Acyl-CoA-binding domain-containing protein 2 (ACBP2).